We begin with the raw amino-acid sequence, 468 residues long: Probable Xaa-Pro aminopeptidase PEPP (468 aa).

Residues Asp264, Asp275, Glu398, and Glu438 each coordinate Mn(2+).

It belongs to the peptidase M24B family. It depends on Mn(2+) as a cofactor.

The enzyme catalyses Release of any N-terminal amino acid, including proline, that is linked to proline, even from a dipeptide or tripeptide.. Functionally, catalyzes the removal of a penultimate prolyl residue from the N-termini of peptides. The protein is Probable Xaa-Pro aminopeptidase PEPP (PEPP) of Ajellomyces dermatitidis (strain ER-3 / ATCC MYA-2586) (Blastomyces dermatitidis).